The chain runs to 159 residues: Putative 4-hydroxy-4-methyl-2-oxoglutarate aldolase (159 aa).

Residues 78-81 (GDVI) and R100 each bind substrate. D101 serves as a coordination point for a divalent metal cation.

It belongs to the class II aldolase/RraA-like family. Homotrimer. The cofactor is a divalent metal cation.

The catalysed reaction is 4-hydroxy-4-methyl-2-oxoglutarate = 2 pyruvate. It carries out the reaction oxaloacetate + H(+) = pyruvate + CO2. In terms of biological role, catalyzes the aldol cleavage of 4-hydroxy-4-methyl-2-oxoglutarate (HMG) into 2 molecules of pyruvate. Also contains a secondary oxaloacetate (OAA) decarboxylase activity due to the common pyruvate enolate transition state formed following C-C bond cleavage in the retro-aldol and decarboxylation reactions. In Mycobacterium sp. (strain KMS), this protein is Putative 4-hydroxy-4-methyl-2-oxoglutarate aldolase.